A 1093-amino-acid polypeptide reads, in one-letter code: Isoleucine--tRNA ligase, chloroplastic/mitochondrial (1093 aa).

The tract at residues 69-103 (PNNEFGHSSKRRSRGPVMAAKKASEGEKQEDGKYK) is disordered. A compositionally biased stretch (basic and acidic residues) spans 90 to 103 (KASEGEKQEDGKYK). Positions 155–165 (PYANGDLHMGH) match the 'HIGH' region motif. E682 is a binding site for L-isoleucyl-5'-AMP. The 'KMSKS' region signature appears at 723–727 (KMSKS). Residue K726 coordinates ATP. 4 residues coordinate Zn(2+): C1050, C1053, C1070, and C1073.

The protein belongs to the class-I aminoacyl-tRNA synthetase family.

It is found in the plastid. It localises to the chloroplast. Its subcellular location is the mitochondrion. The enzyme catalyses tRNA(Ile) + L-isoleucine + ATP = L-isoleucyl-tRNA(Ile) + AMP + diphosphate. In Arabidopsis thaliana (Mouse-ear cress), this protein is Isoleucine--tRNA ligase, chloroplastic/mitochondrial.